Here is a 303-residue protein sequence, read N- to C-terminus: Coenzyme PQQ synthesis protein B (303 aa).

The protein belongs to the PqqB family.

Its pathway is cofactor biosynthesis; pyrroloquinoline quinone biosynthesis. Functionally, may be involved in the transport of PQQ or its precursor to the periplasm. The polypeptide is Coenzyme PQQ synthesis protein B (Pseudomonas entomophila (strain L48)).